We begin with the raw amino-acid sequence, 438 residues long: uncharacterized protein (438 aa).

A signal peptide spans 1–32; sequence MARPLLGKTSSVRRRLESLSACSIFFFLRKFC.

This is an uncharacterized protein from Frog virus 3 (isolate Goorha) (FV-3).